The following is a 214-amino-acid chain: Charged multivesicular body protein 2b-A (214 aa).

Residues 25-55 (QRAITRDRTALEKQEKQLEMEIKKMAKAGNK) are a coiled coil. Residues 178 to 214 (MAKAPSAAKGLPSASASKSTGISDEEIERQLKALGVD) are disordered. The short motif at 202-212 (EEIERQLKALG) is the MIT-interacting motif element.

It belongs to the SNF7 family. As to quaternary structure, probable core component of the endosomal sorting required for transport complex III (ESCRT-III). ESCRT-III components are thought to multimerize to form a flat lattice on the perimeter membrane of the endosome.

It localises to the cytoplasm. The protein resides in the cytosol. The protein localises to the late endosome membrane. In terms of biological role, probable core component of the endosomal sorting required for transport complex III (ESCRT-III) which is involved in multivesicular bodies (MVBs) formation and sorting of endosomal cargo proteins into MVBs. MVBs contain intraluminal vesicles (ILVs) that are generated by invagination and scission from the limiting membrane of the endosome and mostly are delivered to lysosomes enabling degradation of membrane proteins, such as stimulated growth factor receptors, lysosomal enzymes and lipids. The protein is Charged multivesicular body protein 2b-A (chmp2b-a) of Xenopus laevis (African clawed frog).